Here is a 669-residue protein sequence, read N- to C-terminus: L-type lectin-domain containing receptor kinase IV.4 (669 aa).

Positions 1 to 23 (MFFIKLFTIFFLSFFWQSLKSSS) are cleaved as a signal peptide. The Extracellular portion of the chain corresponds to 24–294 (QIIDFTYNGF…TRVYRFYKNW (271 aa)). A legume-lectin like region spans residues 26 to 260 (IDFTYNGFRP…SEIFVLGWSF (235 aa)). 5 N-linked (GlcNAc...) asparagine glycosylation sites follow: N58, N80, N127, N152, and N185. Residues 295–315 (VPLISLLLIPFLLIIFLVRFI) traverse the membrane as a helical segment. Topologically, residues 316–669 (MKRRRKFAEE…VAYSLLSSGR (354 aa)) are cytoplasmic. Residues 350–627 (FKDKNILGSG…LQYLRGDAML (278 aa)) form the Protein kinase domain. ATP-binding positions include 356 to 364 (LGSGGFGSV) and K379. Residue D475 is the Proton acceptor of the active site.

In the C-terminal section; belongs to the protein kinase superfamily. Ser/Thr protein kinase family. This sequence in the N-terminal section; belongs to the leguminous lectin family.

It localises to the cell membrane. The enzyme catalyses L-seryl-[protein] + ATP = O-phospho-L-seryl-[protein] + ADP + H(+). It catalyses the reaction L-threonyl-[protein] + ATP = O-phospho-L-threonyl-[protein] + ADP + H(+). Involved in resistance response to the pathogenic oomycetes Phytophthora infestans and Phytophthora capsici and to the pathogenic bacteria Pseudomonas syringae. This is L-type lectin-domain containing receptor kinase IV.4 from Arabidopsis thaliana (Mouse-ear cress).